Reading from the N-terminus, the 247-residue chain is ATP synthase subunit a, chloroplastic (247 aa).

A run of 5 helical transmembrane segments spans residues 36–56 (GQVLMTSWFVFAVIAILSIAG), 95–115 (IPFLGTLFLFIFVSNWSGALI), 134–154 (INTTVALALLTSTAYFYAGFS), 199–219 (LVVGVLVALVPLVVPIPIMLL), and 220–240 (GLFTSGIQALVFATLAGAYIG).

It belongs to the ATPase A chain family. F-type ATPases have 2 components, CF(1) - the catalytic core - and CF(0) - the membrane proton channel. CF(1) has five subunits: alpha(3), beta(3), gamma(1), delta(1), epsilon(1). CF(0) has four main subunits: a, b, b' and c.

It is found in the plastid. It localises to the chloroplast thylakoid membrane. Its function is as follows. Key component of the proton channel; it plays a direct role in the translocation of protons across the membrane. The chain is ATP synthase subunit a, chloroplastic from Tupiella akineta (Green alga).